The chain runs to 538 residues: Nucleobase-ascorbate transporter 7 (538 aa).

The segment covering 1–11 (MAGGGGGGGGV) has biased composition (gly residues). The segment at 1 to 20 (MAGGGGGGGGVAPPLKHDGL) is disordered. 12 helical membrane passes run 45 to 65 (AILL…LIPT), 81 to 101 (MVQT…FFGT), 103 to 123 (LPAV…IILA), 143 to 163 (IQGA…SGLW), 166 to 186 (VVRL…GFGL), 191 to 211 (FPLL…LLLF), 229 to 249 (FAVI…TVGG), 295 to 315 (FAMM…YIVV), 372 to 394 (VVQI…AIFA), 398 to 420 (APVV…LSLL), 432 to 452 (FILG…NQYT), and 471 to 491 (INVP…FLDV).

Belongs to the nucleobase:cation symporter-2 (NCS2) (TC 2.A.40) family. Expressed exclusively in ovules.

The protein localises to the cell membrane. In Arabidopsis thaliana (Mouse-ear cress), this protein is Nucleobase-ascorbate transporter 7 (NAT7).